We begin with the raw amino-acid sequence, 533 residues long: Glucose-6-phosphate isomerase (533 aa).

Glu341 functions as the Proton donor in the catalytic mechanism. Residues His372 and Lys501 contribute to the active site.

Belongs to the GPI family.

It localises to the cytoplasm. The enzyme catalyses alpha-D-glucose 6-phosphate = beta-D-fructose 6-phosphate. It participates in carbohydrate biosynthesis; gluconeogenesis. The protein operates within carbohydrate degradation; glycolysis; D-glyceraldehyde 3-phosphate and glycerone phosphate from D-glucose: step 2/4. Its function is as follows. Catalyzes the reversible isomerization of glucose-6-phosphate to fructose-6-phosphate. This is Glucose-6-phosphate isomerase from Cereibacter sphaeroides (strain KD131 / KCTC 12085) (Rhodobacter sphaeroides).